A 538-amino-acid polypeptide reads, in one-letter code: Small ribosomal subunit protein uS3m (538 aa).

The tract at residues Ser-111–Ile-134 is disordered. Over residues Asn-120–Ile-134 the composition is skewed to basic and acidic residues.

Belongs to the universal ribosomal protein uS3 family.

The protein localises to the mitochondrion. This is Small ribosomal subunit protein uS3m (RPS3) from Oryza sativa subsp. japonica (Rice).